Reading from the N-terminus, the 214-residue chain is Adenylate kinase (214 aa).

14–19 (GSGKGT) provides a ligand contact to ATP. Residues 34 to 63 (SSGDLFRSAIKSATPLGSKAAEYINKGLLV) form an NMP region. Residues serine 35, arginine 40, 61 to 63 (LLV), 89 to 92 (GFPR), and glutamine 96 each bind AMP. The segment at 130–163 (SRFICPACNYVYNQSQGFKECPTCHVALIRRSDD) is LID. Arginine 131 is an ATP binding site. Residues cysteine 134 and cysteine 137 each contribute to the Zn(2+) site. 140–141 (VY) is a binding site for ATP. Zn(2+) contacts are provided by cysteine 150 and cysteine 153. AMP contacts are provided by arginine 160 and arginine 171. Residue threonine 199 participates in ATP binding.

It belongs to the adenylate kinase family. As to quaternary structure, monomer.

The protein localises to the cytoplasm. It catalyses the reaction AMP + ATP = 2 ADP. The protein operates within purine metabolism; AMP biosynthesis via salvage pathway; AMP from ADP: step 1/1. Catalyzes the reversible transfer of the terminal phosphate group between ATP and AMP. Plays an important role in cellular energy homeostasis and in adenine nucleotide metabolism. This is Adenylate kinase from Chlamydia caviae (strain ATCC VR-813 / DSM 19441 / 03DC25 / GPIC) (Chlamydophila caviae).